Here is a 147-residue protein sequence, read N- to C-terminus: Hemoglobin subunit beta (147 aa).

At valine 2 the chain carries N-acetylvaline. The Globin domain maps to 3-147; the sequence is HLTGEEKAAV…VANALAHKYH (145 aa). Threonine 13 carries the phosphothreonine modification. Serine 45 is modified (phosphoserine). Lysine 60 carries the N6-acetyllysine modification. Residue histidine 64 participates in heme b binding. Residue lysine 83 is modified to N6-acetyllysine. Histidine 93 is a binding site for heme b. Residue cysteine 94 is modified to S-nitrosocysteine. At lysine 145 the chain carries N6-acetyllysine.

This sequence belongs to the globin family. In terms of assembly, heterotetramer of two alpha chains and two beta chains. As to expression, red blood cells.

Involved in oxygen transport from the lung to the various peripheral tissues. The polypeptide is Hemoglobin subunit beta (HBB) (Lagothrix lagotricha (Brown woolly monkey)).